The sequence spans 324 residues: D-alanine--D-alanine ligase (324 aa).

The ATP-grasp domain maps to 112-312 (KAVLAAAGVT…FDQLVLWIVE (201 aa)). An ATP-binding site is contributed by 139–193 (LQPPYVVKPNAEGSSVGVFIIKEGANRPPEEVGAPSWTFGEEVMVEPYIQGMELA). The Mg(2+) site is built by Asp265, Glu279, and Asn281.

Belongs to the D-alanine--D-alanine ligase family. Mg(2+) serves as cofactor. Requires Mn(2+) as cofactor.

The protein localises to the cytoplasm. The catalysed reaction is 2 D-alanine + ATP = D-alanyl-D-alanine + ADP + phosphate + H(+). Its pathway is cell wall biogenesis; peptidoglycan biosynthesis. Functionally, cell wall formation. The sequence is that of D-alanine--D-alanine ligase from Caulobacter vibrioides (strain ATCC 19089 / CIP 103742 / CB 15) (Caulobacter crescentus).